Reading from the N-terminus, the 1180-residue chain is Pyruvate carboxylase 2 (1180 aa).

At Ser2 the chain carries N-acetylserine. The Biotin carboxylation domain maps to 19–471 (EKNKILVANR…WTTFIDDTPQ (453 aa)). ATP is bound by residues Lys137, Glu221, and His256. The 198-residue stretch at 141–338 (RHLAARANVP…IVSAQIQIAA (198 aa)) folds into the ATP-grasp domain. The active site involves Arg313. A Pyruvate carboxyltransferase domain is found at 558–825 (TLLMDTTWRD…DTGINVEHVR (268 aa)). Substrate is bound by residues 566 to 570 (RDAHQ) and Arg639. Asp567 lines the a divalent metal cation pocket. Lys735, His765, and His767 together coordinate a divalent metal cation. Position 735 is an N6-carboxylysine (Lys735). Substrate is bound at residue Thr899. Residues 1095 to 1170 (KADVHDTHQI…DASDLLVVLE (76 aa)) form the Biotinyl-binding domain. Lys1136 bears the N6-biotinyllysine mark.

As to quaternary structure, homotetramer. The cofactor is biotin. Zn(2+) serves as cofactor.

It localises to the cytoplasm. The catalysed reaction is hydrogencarbonate + pyruvate + ATP = oxaloacetate + ADP + phosphate + H(+). It functions in the pathway carbohydrate biosynthesis; gluconeogenesis. Functionally, pyruvate carboxylase catalyzes a 2-step reaction, involving the ATP-dependent carboxylation of the covalently attached biotin in the first step and the transfer of the carboxyl group to pyruvate in the second. This chain is Pyruvate carboxylase 2 (PYC2), found in Saccharomyces cerevisiae (strain ATCC 204508 / S288c) (Baker's yeast).